The chain runs to 594 residues: ATPase family AAA domain-containing protein 3 (594 aa).

Residues methionine 1–glycine 50 form a disordered region. Residues methionine 1–lysine 242 lie on the Mitochondrial intermembrane side of the membrane. Residues proline 15–proline 27 show a composition bias toward pro residues. Over residues glycine 33–serine 44 the composition is skewed to basic and acidic residues. A coiled-coil region spans residues leucine 51–glutamate 213. Residues valine 243 to alanine 260 form a helical membrane-spanning segment. Residues lysine 261–valine 594 lie on the Mitochondrial matrix side of the membrane. ATP is bound at residue glycine 348–threonine 355. Over residues glutamate 571–glycine 581 the composition is skewed to basic and acidic residues. Residues glutamate 571–valine 594 form a disordered region.

It belongs to the AAA ATPase family.

It is found in the mitochondrion inner membrane. Its subcellular location is the mitochondrion matrix. The protein localises to the mitochondrion nucleoid. Functionally, essential for mitochondrial network organization, mitochondrial metabolism and cell growth at organism and cellular level. May play an important role in mitochondrial protein synthesis. May also participate in mitochondrial DNA replication. May bind to mitochondrial DNA D-loops and contribute to nucleoid stability. Required for enhanced channeling of cholesterol for hormone-dependent steroidogenesis. The polypeptide is ATPase family AAA domain-containing protein 3 (atad3) (Xenopus tropicalis (Western clawed frog)).